Here is a 569-residue protein sequence, read N- to C-terminus: Phosphatase and actin regulator 2 (569 aa).

Residues 1 to 13 (MGQTSVSALSPQP) are compositionally biased toward polar residues. Residues 1 to 47 (MGQTSVSALSPQPGSVDGLDKASIANSDGPPAGSQTPPFKRKGKLST) are disordered. A Phosphoserine modification is found at serine 27. Threonine 36 carries the post-translational modification Phosphothreonine. Residues 71–96 (AVLERKISTRQSREELIRRGLLKELP) form an RPEL 1 repeat. Disordered stretches follow at residues 98–253 (QDGD…TGKP) and 295–483 (PTLP…QEAK). Residues 140–151 (GPPREEQAEEKT) are compositionally biased toward basic and acidic residues. Residues 162–176 (GSKASSSPSASSTSS) are compositionally biased toward low complexity. Over residues 212 to 224 (LSPNTVTSETSSL) the composition is skewed to polar residues. Residue serine 357 is modified to Phosphoserine. Acidic residues predominate over residues 386 to 399 (TDDDDEEDDDDDST). RPEL repeat units follow at residues 412-437 (DTLAIKLGNRPSKKELEDKNILQRTS), 450-475 (TKLVRRLSQRPTTEELEQRSILKQKN), and 488-513 (RRLSRKLSLRPTVPELQARRILRFNE). Over residues 423 to 444 (SKKELEDKNILQRTSEEERQEL) the composition is skewed to basic and acidic residues. Phosphoserine is present on serine 457. A compositionally biased stretch (basic and acidic residues) spans 461–483 (TTEELEQRSILKQKNEEEEQEAK). Residue serine 495 is modified to Phosphoserine.

Belongs to the phosphatase and actin regulator family. Binds PPP1CA and actin. As to expression, expressed in the brain with high levels in the cerebellum, specifically in the Purkinje cell layer, choroid plexus and thalamus (ventral, rhomboid and anterior nuclei). Moderate to high expression in the hippocampus, piriform cortex, olfactory bulb, entorhinal cortex, as well as in geniculate bodies, lamboid septal zone, preoptic area and ventral pallidum (at protein level).

In Rattus norvegicus (Rat), this protein is Phosphatase and actin regulator 2 (Phactr2).